The sequence spans 411 residues: Probable protein S-acyltransferase 2 (411 aa).

2 helical membrane-spanning segments follow: residues 56 to 76 and 85 to 105; these read LTTA…VFLI and SLIL…LFLT. The DHHC domain maps to 160–210; it reads KFCDTCLLYRPPRASHCSICNNCVQRFDHHCPWVGQCIALRNYPYFICFIS. Cysteine 190 acts as the S-palmitoyl cysteine intermediate in catalysis. A run of 2 helical transmembrane segments spans residues 205-225 and 245-265; these read FICF…FSWV and FVVL…LTVF. Residue serine 405 is modified to Phosphoserine.

The protein belongs to the DHHC palmitoyltransferase family. In terms of tissue distribution, expressed in flowers and pollen.

It is found in the cytoplasmic vesicle membrane. It carries out the reaction L-cysteinyl-[protein] + hexadecanoyl-CoA = S-hexadecanoyl-L-cysteinyl-[protein] + CoA. In terms of biological role, palmitoyl acyltransferase. This is Probable protein S-acyltransferase 2 (PAT02) from Arabidopsis thaliana (Mouse-ear cress).